We begin with the raw amino-acid sequence, 422 residues long: uncharacterized protein (422 aa).

Belongs to the asfivirus K421R family.

The protein localises to the virion. This is an uncharacterized protein from Ornithodoros (relapsing fever ticks).